A 373-amino-acid polypeptide reads, in one-letter code: MKIIHTADWHLGKILNGKQLLEDQAYILDMFVEKMKEEEPDIIVIAGDLYDTTYPSKDAIMLLEQAIGKLNLELRIPIIMISGNHDGKERLNYGASWFENNQLFIRTDFTSINSPIEINGVNFYTLPYATVSEMKHYFEDDTIETHQQGITRCIETIAPEIDEGAINILISHLTVQGGKTSDSERPLTIGTVESVQKGVFDIFDYVMLGHLHHPFSIEDDKIKYSGSLLQYSFSEAGQAKGYRRVTINDGIINDVFIPLKPLRQLEIISGEYNDVINEKVHVKNKDNYLHFKLKNMSHITDPMMSLKQIYPNTLALTNETFSYNEENNAIEISEKDDMSIIEMFYNHITDKELSDIQSNKIKNILENELRKED.

Belongs to the SbcD family. As to quaternary structure, heterodimer of SbcC and SbcD.

In terms of biological role, sbcCD cleaves DNA hairpin structures. These structures can inhibit DNA replication and are intermediates in certain DNA recombination reactions. The complex acts as a 3'-&gt;5' double strand exonuclease that can open hairpins. It also has a 5' single-strand endonuclease activity. This Staphylococcus aureus (strain MRSA252) protein is Nuclease SbcCD subunit D (sbcD).